Consider the following 328-residue polypeptide: Methionyl-tRNA formyltransferase (328 aa).

A (6S)-5,6,7,8-tetrahydrofolate-binding site is contributed by S121–P124.

It belongs to the Fmt family.

It carries out the reaction L-methionyl-tRNA(fMet) + (6R)-10-formyltetrahydrofolate = N-formyl-L-methionyl-tRNA(fMet) + (6S)-5,6,7,8-tetrahydrofolate + H(+). In terms of biological role, attaches a formyl group to the free amino group of methionyl-tRNA(fMet). The formyl group appears to play a dual role in the initiator identity of N-formylmethionyl-tRNA by promoting its recognition by IF2 and preventing the misappropriation of this tRNA by the elongation apparatus. This chain is Methionyl-tRNA formyltransferase, found in Paraburkholderia phytofirmans (strain DSM 17436 / LMG 22146 / PsJN) (Burkholderia phytofirmans).